A 210-amino-acid chain; its full sequence is Outer-membrane lipoprotein carrier protein (210 aa).

A signal peptide spans 1-26; it reads MHMIRRAAGALAVFAVAALAAAPAWA.

This sequence belongs to the LolA family. As to quaternary structure, monomer.

Its subcellular location is the periplasm. Its function is as follows. Participates in the translocation of lipoproteins from the inner membrane to the outer membrane. Only forms a complex with a lipoprotein if the residue after the N-terminal Cys is not an aspartate (The Asp acts as a targeting signal to indicate that the lipoprotein should stay in the inner membrane). In Bordetella bronchiseptica (strain ATCC BAA-588 / NCTC 13252 / RB50) (Alcaligenes bronchisepticus), this protein is Outer-membrane lipoprotein carrier protein.